The sequence spans 598 residues: uncharacterized protein (598 aa).

Residues 1 to 19 (MSVPLRFSTPSSSPSASDN) show a composition bias toward low complexity. Disordered stretches follow at residues 1 to 54 (MSVP…MRPK), 139 to 176 (QKNQ…PNWK), and 194 to 279 (EAQL…ITMP). At 1 to 313 (MSVPLRFSTP…CKIRHFFREG (313 aa)) the chain is on the cytoplasmic side. Residues 30-48 (ELDTFNTTDVPRRVNTTKA) show a composition bias toward polar residues. Residues 147–165 (RANSRVNSRANSRANSSVS) show a composition bias toward low complexity. Composition is skewed to polar residues over residues 218–242 (FSLQ…SSAI) and 255–276 (PRNN…SQDI). Residues 314–334 (FAEFLGTLVLVVFGVGSNLQA) form a helical membrane-spanning segment. Residues 335–346 (TVTNGAGGSFES) are Extracellular-facing. The helical transmembrane segment at 347–367 (LSFAWGFGCMLGVYIAGGISG) threads the bilayer. The Cytoplasmic portion of the chain corresponds to 368-388 (GHVNPAVTISLAIFRKFPWYK). The short motif at 371 to 373 (NPA) is the NPA 1 element. The chain crosses the membrane as a helical span at residues 389-409 (VPIYIFFQIWGAFFGGALAYG). Topologically, residues 410–444 (YHWSSITEFEGGKDIRTPATGGCLYTNPKPYVTWR) are extracellular. Residues 445–465 (NAFFDEFIGTAVLVGCLFAIL) form a helical membrane-spanning segment. The Cytoplasmic portion of the chain corresponds to 466–473 (DDTNSPPT). Residues 474–494 (QGMTAFIVGLLIAAIGMALGY) traverse the membrane as a helical segment. The Extracellular segment spans residues 495–532 (QTSFTLNPARDLGPRMFAWWIGYGPHSFHLYHWWWTWG). The NPA 2 signature appears at 501 to 503 (NPA). A helical membrane pass occupies residues 533-553 (AWGGTIGGGIAGGLIYDLVIF). Residues 554 to 598 (TGPESPLNYPDNGFIDKKVHQITAKFEKEEEVENLEKTDSPIENN) lie on the Cytoplasmic side of the membrane.

Belongs to the MIP/aquaporin (TC 1.A.8) family.

It is found in the membrane. This is an uncharacterized protein from Schizosaccharomyces pombe (strain 972 / ATCC 24843) (Fission yeast).